The sequence spans 293 residues: MFHGSIPALVTPFKNGAVDEAAFAALVERQIAAGSAALVPVGTTGETSTLSTEEHKRVVSLCVEVAAGRVPVIAGAGSNSTDEAIDLVAHAKAAGADAALVVSPYYNNPNQDGLFEHFRAINDAVALPVVLYNVPSRTVVDLKPETVARLARLPNIVGIKDATGDMDRVSYHSALIGDEEQFVQLSGDDPSALGFLAMGGAGCISVTANVAPELCAAMHLAFEDGDLESARAIERRLINLHRAMFCSPSPGPAKYALSRMGLCGPEVRLPLTAPDAAAEAMIDAAMALAGLNT.

Residue Thr44 coordinates pyruvate. Catalysis depends on Tyr132, which acts as the Proton donor/acceptor. The active-site Schiff-base intermediate with substrate is Lys160. A pyruvate-binding site is contributed by Ile204.

The protein belongs to the DapA family. Homotetramer; dimer of dimers.

It is found in the cytoplasm. It carries out the reaction L-aspartate 4-semialdehyde + pyruvate = (2S,4S)-4-hydroxy-2,3,4,5-tetrahydrodipicolinate + H2O + H(+). Its pathway is amino-acid biosynthesis; L-lysine biosynthesis via DAP pathway; (S)-tetrahydrodipicolinate from L-aspartate: step 3/4. Its function is as follows. Catalyzes the condensation of (S)-aspartate-beta-semialdehyde [(S)-ASA] and pyruvate to 4-hydroxy-tetrahydrodipicolinate (HTPA). The polypeptide is 4-hydroxy-tetrahydrodipicolinate synthase (Hyphomonas neptunium (strain ATCC 15444)).